Reading from the N-terminus, the 305-residue chain is Achromobactin-binding periplasmic protein (305 aa).

Positions 1–29 are cleaved as a signal peptide; that stretch reads MNEYLVSRRRLLRLSLSLLPLGLGRPALA. The 266-residue stretch at 37-302 folds into the Fe/B12 periplasmic-binding domain; it reads RVITLFQGAT…DIARVTGIAG (266 aa).

It belongs to the bacterial solute-binding protein 8 family.

It localises to the periplasm. Functionally, binds citrate- or chloride-dependent Fe(3+); part of the binding-protein-dependent transport system CbrABCD for uptake of the siderophore achromobactin. The chain is Achromobactin-binding periplasmic protein (cbrA) from Dickeya dadantii (strain 3937) (Erwinia chrysanthemi (strain 3937)).